Here is a 155-residue protein sequence, read N- to C-terminus: MNCPFCSHFESKVVDSRPTDEGQAIRRRRECVSCHKRFTTYEKIEEIPLIVVKKSGNRESFNRNKVLNGMIRACEKRPVPLNKIEAIVDHIEKQLYNSMEKEITTEFIGTLVIDQIKQLDEVAYVRFASVYREFKDINTFMDELKKLLKEKPEEA.

A zinc finger lies at 3 to 34 (CPFCSHFESKVVDSRPTDEGQAIRRRRECVSC). One can recognise an ATP-cone domain in the interval 49–139 (LIVVKKSGNR…VYREFKDINT (91 aa)).

It belongs to the NrdR family. The cofactor is Zn(2+).

In terms of biological role, negatively regulates transcription of bacterial ribonucleotide reductase nrd genes and operons by binding to NrdR-boxes. The protein is Transcriptional repressor NrdR of Alkaliphilus metalliredigens (strain QYMF).